The primary structure comprises 1613 residues: NAD-specific glutamate dehydrogenase (1613 aa).

Residue Lys-849 is part of the active site.

Belongs to the Glu/Leu/Phe/Val dehydrogenases family.

The catalysed reaction is L-glutamate + NAD(+) + H2O = 2-oxoglutarate + NH4(+) + NADH + H(+). In terms of biological role, involved in arginine catabolism by converting L-glutamate, into 2-oxoglutarate, which is then channeled into the tricarboxylic acid cycle. This is NAD-specific glutamate dehydrogenase from Halomonas elongata (strain ATCC 33173 / DSM 2581 / NBRC 15536 / NCIMB 2198 / 1H9).